Here is a 251-residue protein sequence, read N- to C-terminus: Capsid protein (251 aa).

The Bipartite nuclear localization signal signature appears at 3 to 20 (KRDLPWRSMAGTSKVSRN). The Nuclear localization signal signature appears at 35 to 49 (KAAEWVNRPMYRKPR). A zinc finger spans residues 63 to 80 (CEGPCKVQSFEQRHDISH). The Nuclear export signal motif lies at 96-117 (ITHRVGKRFCVKSVYILGKIWM). The Bipartite nuclear localization signal signature appears at 195–242 (KRFWKVNNHVVYNHQEAGKYENHTENALLLYMACTHASNPVYATLKIR).

Belongs to the geminiviridae capsid protein family. In terms of assembly, homomultimer. Binds to single-stranded and double-stranded viral DNA. Interacts (via nuclear localization signals) with host importin alpha-1a.

It is found in the virion. The protein localises to the host nucleus. Functionally, encapsidates the viral DNA into characteristic twinned ('geminate') particles. Binds the genomic viral ssDNA and shuttles it into and out of the cell nucleus. The CP of bipartite geminiviruses is not required for cell-to-cell or systemic movement. In Tomato mottle virus (isolate Florida) (ToMoV), this protein is Capsid protein.